Consider the following 191-residue polypeptide: Dephospho-CoA kinase (191 aa).

The region spanning 3–191 is the DPCK domain; sequence AIGITGSYAS…NLIANLECRV (189 aa). 11-16 provides a ligand contact to ATP; that stretch reads ASGKTF.

This sequence belongs to the CoaE family.

It localises to the cytoplasm. The enzyme catalyses 3'-dephospho-CoA + ATP = ADP + CoA + H(+). The protein operates within cofactor biosynthesis; coenzyme A biosynthesis; CoA from (R)-pantothenate: step 5/5. Its function is as follows. Catalyzes the phosphorylation of the 3'-hydroxyl group of dephosphocoenzyme A to form coenzyme A. The chain is Dephospho-CoA kinase from Rickettsia bellii (strain RML369-C).